The sequence spans 79 residues: Putative defensin-like protein 146 (79 aa).

The N-terminal stretch at 1–25 is a signal peptide; that stretch reads MMKNQFQLSLIILTFFILLELGVMG. Intrachain disulfides connect Cys-35/Cys-78, Cys-46/Cys-66, Cys-51/Cys-72, and Cys-55/Cys-74.

It belongs to the DEFL family.

It localises to the secreted. The sequence is that of Putative defensin-like protein 146 (LCR9) from Arabidopsis thaliana (Mouse-ear cress).